Consider the following 525-residue polypeptide: Sensory neuron membrane protein 1 (525 aa).

At 1-11 (MLLPKPLKYAA) the chain is on the cytoplasmic side. The helical transmembrane segment at 12-32 (IGGGVFVFGILIGWVIFPVIL) threads the bilayer. The Extracellular segment spans residues 33-456 (KSQIKKEMAL…LKHQLFIPKR (424 aa)). 3 N-linked (GlcNAc...) asparagine glycosylation sites follow: N67, N105, and N229. 3 disulfides stabilise this stretch: C268–C333, C297–C352, and C335–C341. N440 is a glycosylation site (N-linked (GlcNAc...) asparagine). Residues 457 to 477 (IVGVIRWWMVSFGLIAVLAGV) traverse the membrane as a helical segment. The Cytoplasmic portion of the chain corresponds to 478–525 (MYHFKDNIMGWAAKGESTTAKVNPEDGSNEQRGVSVIGQDREPPKVTM). Positions 496–525 (TAKVNPEDGSNEQRGVSVIGQDREPPKVTM) are disordered. Residues 516–525 (QDREPPKVTM) are compositionally biased toward basic and acidic residues.

It belongs to the CD36 family. As to expression, principal component of the olfactory cilia membrane. Localizes to the somata, dendritic neck and cilia of the olfactory neurons (at protein level). Not detected in the axons of ORNs, the cytoplasm of auxiliary cells or non-sensory structures. Expression is universal among ORNs but differential between neuron and sensillum types.

The protein resides in the cell membrane. Functionally, plays an olfactory role that is not restricted to pheromone sensitivity. May be involved in the odor detection properties of the olfactory receptor neurons (ORNs) rather than their differentiation and growth. This chain is Sensory neuron membrane protein 1, found in Antheraea polyphemus (Polyphemus moth).